Here is a 445-residue protein sequence, read N- to C-terminus: Phosphoglucosamine mutase (445 aa).

The Phosphoserine intermediate role is filled by S102. Residues S102, D241, D243, and D245 each coordinate Mg(2+). Phosphoserine is present on S102.

The protein belongs to the phosphohexose mutase family. The cofactor is Mg(2+). In terms of processing, activated by phosphorylation.

It carries out the reaction alpha-D-glucosamine 1-phosphate = D-glucosamine 6-phosphate. In terms of biological role, catalyzes the conversion of glucosamine-6-phosphate to glucosamine-1-phosphate. In Salmonella paratyphi A (strain ATCC 9150 / SARB42), this protein is Phosphoglucosamine mutase.